The chain runs to 456 residues: E3 ubiquitin-protein ligase PUB24 (456 aa).

The region spanning 9 to 83 is the U-box domain; that stretch reads EIPNYFICPI…QHWCVENETR (75 aa).

Auto-ubiquitinated.

The catalysed reaction is S-ubiquitinyl-[E2 ubiquitin-conjugating enzyme]-L-cysteine + [acceptor protein]-L-lysine = [E2 ubiquitin-conjugating enzyme]-L-cysteine + N(6)-ubiquitinyl-[acceptor protein]-L-lysine.. The protein operates within protein modification; protein ubiquitination. In terms of biological role, E3 ubiquitin-protein ligase that acts as a negative regulator of the immunity triggered by the pathogen-associated molecular patterns (PAMPs), in association with PUB22 and PUB23. The polypeptide is E3 ubiquitin-protein ligase PUB24 (PUB24) (Arabidopsis thaliana (Mouse-ear cress)).